Reading from the N-terminus, the 242-residue chain is Anthranilate phosphoribosyltransferase (242 aa).

5-phospho-alpha-D-ribose 1-diphosphate contacts are provided by residues G79, G82 to D83, T87, N89 to T92, K107 to S115, and S119. G79 contacts anthranilate. Residue S91 participates in Mg(2+) binding. An anthranilate-binding site is contributed by N110. R165 provides a ligand contact to anthranilate. Positions 224 and 225 each coordinate Mg(2+).

This sequence belongs to the anthranilate phosphoribosyltransferase family. In terms of assembly, homodimer. It depends on Mg(2+) as a cofactor.

The enzyme catalyses N-(5-phospho-beta-D-ribosyl)anthranilate + diphosphate = 5-phospho-alpha-D-ribose 1-diphosphate + anthranilate. Its pathway is amino-acid biosynthesis; L-tryptophan biosynthesis; L-tryptophan from chorismate: step 2/5. In terms of biological role, catalyzes the transfer of the phosphoribosyl group of 5-phosphorylribose-1-pyrophosphate (PRPP) to anthranilate to yield N-(5'-phosphoribosyl)-anthranilate (PRA). The protein is Anthranilate phosphoribosyltransferase (trpD) of Bacillus caldotenax.